The chain runs to 415 residues: Gamma-glutamyl phosphate reductase (415 aa).

This sequence belongs to the gamma-glutamyl phosphate reductase family.

It localises to the cytoplasm. The catalysed reaction is L-glutamate 5-semialdehyde + phosphate + NADP(+) = L-glutamyl 5-phosphate + NADPH + H(+). The protein operates within amino-acid biosynthesis; L-proline biosynthesis; L-glutamate 5-semialdehyde from L-glutamate: step 2/2. Catalyzes the NADPH-dependent reduction of L-glutamate 5-phosphate into L-glutamate 5-semialdehyde and phosphate. The product spontaneously undergoes cyclization to form 1-pyrroline-5-carboxylate. This chain is Gamma-glutamyl phosphate reductase, found in Dictyoglomus turgidum (strain DSM 6724 / Z-1310).